Here is a 259-residue protein sequence, read N- to C-terminus: 7-cyano-7-deazaguanine synthase (259 aa).

32 to 42 (LSGGLDSVTCL) is an ATP binding site. Residues cysteine 223, cysteine 233, cysteine 236, and cysteine 239 each contribute to the Zn(2+) site.

Belongs to the QueC family. Requires Zn(2+) as cofactor.

It carries out the reaction 7-carboxy-7-deazaguanine + NH4(+) + ATP = 7-cyano-7-deazaguanine + ADP + phosphate + H2O + H(+). The protein operates within purine metabolism; 7-cyano-7-deazaguanine biosynthesis. In terms of biological role, catalyzes the ATP-dependent conversion of 7-carboxy-7-deazaguanine (CDG) to 7-cyano-7-deazaguanine (preQ(0)). This is 7-cyano-7-deazaguanine synthase from Psychrobacter cryohalolentis (strain ATCC BAA-1226 / DSM 17306 / VKM B-2378 / K5).